Reading from the N-terminus, the 668-residue chain is MGNSKQIKRSLTGSILLKKQISQIFFKKLESIFGIALAEDTSDRLMDYLNKSIDYLLDHSVIEGLFSIEIEESKLKSTIESIESTLITDFSLTTDPCYVASTFILYFSKLPNLLLSKISSQLIHSVEISHEEYRINVIRSLLYSLPLQNRNILKMVLHFLKKFSLACNNNNNNNSENNNTIVEDIEVQSAYNRFTKAFMSTTPGNFEISCKAIRLMVMDIDEFDKLPQDIQYMVKDGESIVKAATFDRLVEKLFDLSYGFKDPDYNYTVFHTYDYYTTSVELLGKIVHYYRIACTLTTKLQMEVSITILSVAMFWMKIHHNHLMTDLQFLQKLKIFLDSVPQVPPTQVTYFTYFQTFFKPVIEPLKPLYERGNSFLGPNLTQSSGTSKKKNQLIEKMMINNNINNNNNINNNVNSNSNNNFNNNIDIDIYNIGSNIIAQQITIIDNEMLMAIPPSQFLHKSFSKESKSPQFHDMVSKFNEWARWTSSEILSKEKLVERVVTLSFFIDLAKSCVELGNYNAANAIVGGLNHSSISRLKLTWERLSTKVTQDYDRLLSLFDLSMNYKNYRDEIKSTKAKIIPYLGLFPKDLIAIEEGNDNFTNNNLINTEKFRLLYQTIKKIQSYQQPLFTFKTSEPIKQYLKNISNGLSEEKDFHSISHKLEPRQQQTQ.

Positions Lys-27–Asp-224 constitute a Rho-GAP domain. The N-terminal Ras-GEF domain occupies Gly-237–Ile-362. Residues Gly-433–Arg-663 enclose the Ras-GEF domain.

Functionally, promotes the exchange of Ras-bound GDP by GTP. This is Ras guanine nucleotide exchange factor D (gefD) from Dictyostelium discoideum (Social amoeba).